A 607-amino-acid polypeptide reads, in one-letter code: WD repeat-containing protein 1-A (607 aa).

WD repeat units follow at residues 4-45 (ELKK…IRNI), 48-87 (PAIADIYTEHAHQAVVARYAPSGFYIASGDTSGKLRIWDT), 93-135 (LLKY…LWDT), 138-176 (SVGEITGNIKVINSVDIKQTRPYRLVTGSDDNCCAFLEG), 180-218 (KFKFTMSDHSRFVNCVRFSPDGSKLASAGADGQIFLYDG), 224-263 (VCSLGGSKAHDGGIYAVSWSPDGTQLLSASGDKTTKIWDV), 270-306 (TTFNLGSDVLDQQLGCLWQKDYLLSVSLSGYINYLDK), 311-351 (RPLR…YWDA), 358-408 (TFTG…KMDV), 432-474 (LKDK…LYSI), 480-518 (KDEGKTLPAKGAVTDLAYSHDGAFLAVTDANKVVTVFSV), 523-561 (SEKNSYYGHHAKALSVAWSPDNEHFASSGMDMMVYVWTL), and 566-604 (TRIKMPDAHRLHHVSSLAWLDEHTLATVSHDACVKQWTV).

The protein belongs to the WD repeat AIP1 family.

The protein resides in the cell membrane. Its subcellular location is the cytoplasm. It is found in the cytoskeleton. It localises to the nucleus. In terms of biological role, induces disassembly of actin filaments in conjunction with ADF/cofilin family proteins. Doesn't sever actin filaments alone, but caps the barbed ends of filaments severed by cofilin, which blocks annealing and depolymerization and allows more extensive severing by cofilin. This is WD repeat-containing protein 1-A (wdr1-a) from Xenopus laevis (African clawed frog).